Reading from the N-terminus, the 91-residue chain is Non-specific lipid-transfer protein 1 (91 aa).

Intrachain disulfides connect Cys4/Cys51, Cys14/Cys28, Cys29/Cys74, and Cys49/Cys88.

In terms of tissue distribution, expressed in seeds (at protein level).

Functionally, plant non-specific lipid-transfer proteins transfer phospholipids as well as galactolipids across membranes. May play a role in wax or cutin deposition in the cell walls of expanding epidermal cells and certain secretory tissues. Binds to both saturated and unsaturated lipids, with the highest binding efficiency for linoleic acid, followed by linolenic acid. The protein is Non-specific lipid-transfer protein 1 of Foeniculum vulgare (Fennel).